The sequence spans 63 residues: Large ribosomal subunit protein uL29 (63 aa).

The protein belongs to the universal ribosomal protein uL29 family.

The sequence is that of Large ribosomal subunit protein uL29 from Flavobacterium psychrophilum (strain ATCC 49511 / DSM 21280 / CIP 103535 / JIP02/86).